A 54-amino-acid polypeptide reads, in one-letter code: uncharacterized protein (54 aa).

This is an uncharacterized protein from Saccharomyces cerevisiae (strain ATCC 204508 / S288c) (Baker's yeast).